A 261-amino-acid chain; its full sequence is Cytochrome c oxidase subunit 3 (261 aa).

Residues 1–15 lie on the Mitochondrial matrix side of the membrane; the sequence is MTHQAHAYHMVDPSP. The chain crosses the membrane as a helical span at residues 16–34; that stretch reads WPLTGAVAALLMTSGLAVW. Residues 35–40 are Mitochondrial intermembrane-facing; it reads FHFHST. Residues 41 to 66 form a helical membrane-spanning segment; that stretch reads TLMALGTVLLLLTMYQWWRDIIREGT. At 67 to 72 the chain is on the mitochondrial matrix side; the sequence is FQGHHT. A helical transmembrane segment spans residues 73–105; sequence PPVQKGLRYGMILFITSEVFFFLGFFWAFYHAS. The Mitochondrial intermembrane segment spans residues 106–128; the sequence is LAPTPELGGCWPPTGITTLDPFE. A helical transmembrane segment spans residues 129–152; it reads VPLLNTAVLLASGVTVTWAHHSIM. Over 153–155 the chain is Mitochondrial matrix; it reads EGE. A helical transmembrane segment spans residues 156–183; that stretch reads RKQAIHSLTLTILLGFYFTFLQGLEYYD. Topologically, residues 184 to 190 are mitochondrial intermembrane; that stretch reads APFTIAD. Residues 191 to 223 form a helical membrane-spanning segment; it reads GVYGSTFFVATGFHGLHVIIGSTFLAVCLLRQI. Residues 224–232 lie on the Mitochondrial matrix side of the membrane; sequence RYHFTSEHH. Residues 233–256 form a helical membrane-spanning segment; it reads FGFEAAAWYWHFVDVVWLFLYISI. Topologically, residues 257 to 261 are mitochondrial intermembrane; it reads YWWGS.

This sequence belongs to the cytochrome c oxidase subunit 3 family. Component of the cytochrome c oxidase (complex IV, CIV), a multisubunit enzyme composed of 14 subunits. The complex is composed of a catalytic core of 3 subunits MT-CO1, MT-CO2 and MT-CO3, encoded in the mitochondrial DNA, and 11 supernumerary subunits COX4I, COX5A, COX5B, COX6A, COX6B, COX6C, COX7A, COX7B, COX7C, COX8 and NDUFA4, which are encoded in the nuclear genome. The complex exists as a monomer or a dimer and forms supercomplexes (SCs) in the inner mitochondrial membrane with NADH-ubiquinone oxidoreductase (complex I, CI) and ubiquinol-cytochrome c oxidoreductase (cytochrome b-c1 complex, complex III, CIII), resulting in different assemblies (supercomplex SCI(1)III(2)IV(1) and megacomplex MCI(2)III(2)IV(2)).

The protein resides in the mitochondrion inner membrane. The enzyme catalyses 4 Fe(II)-[cytochrome c] + O2 + 8 H(+)(in) = 4 Fe(III)-[cytochrome c] + 2 H2O + 4 H(+)(out). Functionally, component of the cytochrome c oxidase, the last enzyme in the mitochondrial electron transport chain which drives oxidative phosphorylation. The respiratory chain contains 3 multisubunit complexes succinate dehydrogenase (complex II, CII), ubiquinol-cytochrome c oxidoreductase (cytochrome b-c1 complex, complex III, CIII) and cytochrome c oxidase (complex IV, CIV), that cooperate to transfer electrons derived from NADH and succinate to molecular oxygen, creating an electrochemical gradient over the inner membrane that drives transmembrane transport and the ATP synthase. Cytochrome c oxidase is the component of the respiratory chain that catalyzes the reduction of oxygen to water. Electrons originating from reduced cytochrome c in the intermembrane space (IMS) are transferred via the dinuclear copper A center (CU(A)) of subunit 2 and heme A of subunit 1 to the active site in subunit 1, a binuclear center (BNC) formed by heme A3 and copper B (CU(B)). The BNC reduces molecular oxygen to 2 water molecules using 4 electrons from cytochrome c in the IMS and 4 protons from the mitochondrial matrix. This is Cytochrome c oxidase subunit 3 (mt-co3) from Gadus morhua (Atlantic cod).